The primary structure comprises 157 residues: Ubiquitin-like protein 4A (157 aa).

The 76-residue stretch at 1-76 folds into the Ubiquitin-like domain; that stretch reads MQLTVKALQG…LNLVVKPLEK (76 aa). K48 participates in a covalent cross-link: Glycyl lysine isopeptide (Lys-Gly) (interchain with G-Cter in ubiquitin). S90 is modified (phosphoserine). The interval 96–138 is required and sufficient for interaction with BAG6; sequence WQLISKVLARHFSAADASRVLEQLQRDYERSLSRLTLDDIERL.

As to quaternary structure, component of the BAG6/BAT3 complex, at least composed of BAG6, UBL4A and GET4/TRC35. Interacts with BAG6; the interaction is direct and required for UBL4A protein stability. Interacts with USP13; may be indirect via BAG6. Post-translationally, polyubiquitinated. Ubiquitination by AMFR and deubiquitination by USP13 may regulate the interaction between the BAG6/BAT complex and SGTA and therefore may regulate client proteins fate.

It localises to the cytoplasm. The protein resides in the cytosol. Its subcellular location is the nucleus. Functionally, as part of a cytosolic protein quality control complex, the BAG6/BAT3 complex, maintains misfolded and hydrophobic patches-containing proteins in a soluble state and participates in their proper delivery to the endoplasmic reticulum or alternatively can promote their sorting to the proteasome where they undergo degradation. The BAG6/BAT3 complex is involved in the post-translational delivery of tail-anchored/type II transmembrane proteins to the endoplasmic reticulum membrane. Recruited to ribosomes, it interacts with the transmembrane region of newly synthesized tail-anchored proteins and together with SGTA and ASNA1 mediates their delivery to the endoplasmic reticulum. Client proteins that cannot be properly delivered to the endoplasmic reticulum are ubiquitinated and sorted to the proteasome. Similarly, the BAG6/BAT3 complex also functions as a sorting platform for proteins of the secretory pathway that are mislocalized to the cytosol either delivering them to the proteasome for degradation or to the endoplasmic reticulum. The BAG6/BAT3 complex also plays a role in the endoplasmic reticulum-associated degradation (ERAD), a quality control mechanism that eliminates unwanted proteins of the endoplasmic reticulum through their retrotranslocation to the cytosol and their targeting to the proteasome. It maintains these retrotranslocated proteins in an unfolded yet soluble state condition in the cytosol to ensure their proper delivery to the proteasome. This chain is Ubiquitin-like protein 4A (UBL4A), found in Callithrix jacchus (White-tufted-ear marmoset).